Here is a 435-residue protein sequence, read N- to C-terminus: Serine--tRNA ligase (435 aa).

242–244 (TAE) serves as a coordination point for L-serine. 273–275 (RSE) contacts ATP. Glu-296 is an L-serine binding site. 360-363 (EISS) provides a ligand contact to ATP. Ser-396 lines the L-serine pocket.

It belongs to the class-II aminoacyl-tRNA synthetase family. Type-1 seryl-tRNA synthetase subfamily. As to quaternary structure, homodimer. The tRNA molecule binds across the dimer.

It is found in the cytoplasm. It carries out the reaction tRNA(Ser) + L-serine + ATP = L-seryl-tRNA(Ser) + AMP + diphosphate + H(+). It catalyses the reaction tRNA(Sec) + L-serine + ATP = L-seryl-tRNA(Sec) + AMP + diphosphate + H(+). It participates in aminoacyl-tRNA biosynthesis; selenocysteinyl-tRNA(Sec) biosynthesis; L-seryl-tRNA(Sec) from L-serine and tRNA(Sec): step 1/1. Catalyzes the attachment of serine to tRNA(Ser). Is also able to aminoacylate tRNA(Sec) with serine, to form the misacylated tRNA L-seryl-tRNA(Sec), which will be further converted into selenocysteinyl-tRNA(Sec). The protein is Serine--tRNA ligase of Vibrio atlanticus (strain LGP32) (Vibrio splendidus (strain Mel32)).